Consider the following 111-residue polypeptide: Large ribosomal subunit protein P2 (111 aa).

The tract at residues 62–111 (LASVPSGGAGGAAAAGGAAAAGGAAEAAPEEAKEEEKEESDDDMGFGLFD) is disordered. Residues 76-88 (AGGAAAAGGAAEA) are compositionally biased toward low complexity. Phosphoserine is present on serine 101.

The protein belongs to the eukaryotic ribosomal protein P1/P2 family. P1 and P2 exist as dimers at the large ribosomal subunit.

Its function is as follows. Plays an important role in the elongation step of protein synthesis. In Podospora anserina (Pleurage anserina), this protein is Large ribosomal subunit protein P2.